The primary structure comprises 288 residues: ATP synthase subunit a (288 aa).

6 helical membrane passes run 47 to 67 (LDSM…FWMV), 104 to 124 (LIAP…LMDL), 157 to 177 (DPNI…FYSI), 199 to 219 (PIVQ…TLIA), 237 to 257 (LIFI…SVPW), and 258 to 278 (AIFH…LTIV).

It belongs to the ATPase A chain family. F-type ATPases have 2 components, CF(1) - the catalytic core - and CF(0) - the membrane proton channel. CF(1) has five subunits: alpha(3), beta(3), gamma(1), delta(1), epsilon(1). CF(0) has three main subunits: a(1), b(2) and c(9-12). The alpha and beta chains form an alternating ring which encloses part of the gamma chain. CF(1) is attached to CF(0) by a central stalk formed by the gamma and epsilon chains, while a peripheral stalk is formed by the delta and b chains.

It localises to the cell inner membrane. In terms of biological role, key component of the proton channel; it plays a direct role in the translocation of protons across the membrane. The polypeptide is ATP synthase subunit a (Psychrobacter cryohalolentis (strain ATCC BAA-1226 / DSM 17306 / VKM B-2378 / K5)).